The following is a 387-amino-acid chain: Oxidase FUB9 (387 aa).

Residues 1–20 (MSRTNLPIQPAKMSDATSSK) are disordered. The 362-residue stretch at 18–379 (SSKPQIFSIQ…TPAHLSILNA (362 aa)) folds into the FMN hydroxy acid dehydrogenase domain. Tyrosine 44 is a binding site for a 2-oxocarboxylate. 3 residues coordinate FMN: serine 126, glutamine 150, and threonine 178. Position 187 (arginine 187) interacts with a 2-oxocarboxylate. Lysine 250 is a binding site for FMN. The Proton acceptor role is filled by histidine 274. An a 2-oxocarboxylate-binding site is contributed by arginine 277. Residues 305–309 (DGGFR) and 328–329 (GR) each bind FMN.

It belongs to the FMN-dependent alpha-hydroxy acid dehydrogenase family. Requires FMN as cofactor.

The protein operates within mycotoxin biosynthesis. Oxidase; part of the gene cluster that mediates the biosynthesis of fusaric acid, a mycotoxin with low to moderate toxicity to animals and humans, but with high phytotoxic properties. L-aspartate is suggested as fusaric acid amino acid precursor that is activated and further processed to O-acetyl-L-homoserine by cluster enzymes aspartate kinase FUB3 and homoserine O-acetyltransferase FUB5, as well as enzymes of the primary metabolism. The polyketide synthase (PKS) FUB1 generates the triketide trans-2-hexenal which is presumptively released by the hydrolase FUB4 and linked to the NRPS-bound amino acid precursor by NAD(P)-dependent dehydrogenase FUB6. FUB1, FUB4, and the non-canonical NRPS Fub8 may form an enzyme complex. Further processing of the NRPS-bound intermediate might be carried out by FUB6 and the sulfhydrylase FUB7, enabling a spontaneous electrocyclization to close the carbon backbone of fusaric acid. Dihydrofusaric acid is likely to be released via reduction by the thioester reductase (TR) domain of FUB8 whereupon the final oxidation to fusaric acid may (also) be performed by the FMN-dependent dehydrogenase FUB9. The protein is Oxidase FUB9 of Fusarium oxysporum f. sp. lycopersici (strain 4287 / CBS 123668 / FGSC 9935 / NRRL 34936) (Fusarium vascular wilt of tomato).